The chain runs to 238 residues: Probable transcriptional regulatory protein SPD_1725 (238 aa).

This sequence belongs to the TACO1 family. YeeN subfamily.

It is found in the cytoplasm. The protein is Probable transcriptional regulatory protein SPD_1725 of Streptococcus pneumoniae serotype 2 (strain D39 / NCTC 7466).